Here is a 277-residue protein sequence, read N- to C-terminus: NH(3)-dependent NAD(+) synthetase (277 aa).

46–53 (GISGGQDS) serves as a coordination point for ATP. Position 52 (Asp52) interacts with Mg(2+). Arg142 is a deamido-NAD(+) binding site. ATP is bound at residue Thr162. Glu167 provides a ligand contact to Mg(2+). Residues Lys175 and Asp182 each contribute to the deamido-NAD(+) site. The ATP site is built by Lys191 and Thr213. Deamido-NAD(+) is bound at residue 263-264 (HK).

It belongs to the NAD synthetase family. As to quaternary structure, homodimer.

It carries out the reaction deamido-NAD(+) + NH4(+) + ATP = AMP + diphosphate + NAD(+) + H(+). It participates in cofactor biosynthesis; NAD(+) biosynthesis; NAD(+) from deamido-NAD(+) (ammonia route): step 1/1. Its function is as follows. Catalyzes the ATP-dependent amidation of deamido-NAD to form NAD. Uses ammonia as a nitrogen source. The sequence is that of NH(3)-dependent NAD(+) synthetase from Corynebacterium glutamicum (strain R).